We begin with the raw amino-acid sequence, 350 residues long: Protein-glutamate methylesterase/protein-glutamine glutaminase (350 aa).

A Response regulatory domain is found at 5 to 122 (TVLCVDDSAL…REGMLAYSEL (118 aa)). The residue at position 56 (D56) is a 4-aspartylphosphate. Residues 153–345 (LLSSEKLIAV…KRMLAKISSG (193 aa)) enclose the CheB-type methylesterase domain. Residues S165, H191, and D287 contribute to the active site.

Belongs to the CheB family. Phosphorylated by CheA. Phosphorylation of the N-terminal regulatory domain activates the methylesterase activity.

The protein resides in the cytoplasm. The catalysed reaction is [protein]-L-glutamate 5-O-methyl ester + H2O = L-glutamyl-[protein] + methanol + H(+). It catalyses the reaction L-glutaminyl-[protein] + H2O = L-glutamyl-[protein] + NH4(+). Functionally, involved in chemotaxis. Part of a chemotaxis signal transduction system that modulates chemotaxis in response to various stimuli. Catalyzes the demethylation of specific methylglutamate residues introduced into the chemoreceptors (methyl-accepting chemotaxis proteins or MCP) by CheR. Also mediates the irreversible deamidation of specific glutamine residues to glutamic acid. The sequence is that of Protein-glutamate methylesterase/protein-glutamine glutaminase from Photorhabdus laumondii subsp. laumondii (strain DSM 15139 / CIP 105565 / TT01) (Photorhabdus luminescens subsp. laumondii).